A 365-amino-acid polypeptide reads, in one-letter code: L-lactate oxidase (365 aa).

Residues 2–365 (TAISSPINLF…QDIDTSFLHL (364 aa)) form the FMN hydroxy acid dehydrogenase domain. Tyrosine 28 contributes to the pyruvate binding site. FMN-binding positions include 81–83 (PMA), serine 110, and glutamine 135. Pyruvate is bound at residue tyrosine 137. Threonine 163 is an FMN binding site. Pyruvate is bound at residue arginine 172. Positions 239 and 261 each coordinate FMN. Positions 263 and 266 each coordinate pyruvate. Histidine 263 serves as the catalytic Proton acceptor. Residues 294-298 (DGGIR) and arginine 318 each bind FMN.

It belongs to the FMN-dependent alpha-hydroxy acid dehydrogenase family. As to quaternary structure, homotetramer. FMN is required as a cofactor.

The enzyme catalyses (S)-lactate + O2 = pyruvate + H2O2. It catalyses the reaction glyoxylate + O2 + H2O = oxalate + H2O2 + H(+). In terms of biological role, catalyzes the oxidation of (S)-lactate (L-lactate) to pyruvate, with a reduction of O2 to H2O2. In extant N2-fixing cyanobacteria such as Nostoc, this enzyme primarily serves as an O2-scavenging enzyme, protecting nitrogenase that is extremely sensitive to O2, and is therefore an essential partner in N2 fixation. Also shows clear oxidase activity with glyoxylate in vitro, and low activity with glycerate, hydroxypyruvate and glycolate. The very low glycolate oxidase activity indicates that this enzyme is unlikely to be involved in photorespiratory glycolate metabolism, a pathway that seems to exist in this cyanobacterium, but in which the oxidation of glycolate is taken over by glycolate dehydrogenase (GlcD). Is not able to use D-lactate as substrate and does not show any dehydrogenase activity with NAD(+) or NADP(+). The protein is L-lactate oxidase of Nostoc sp. (strain PCC 7120 / SAG 25.82 / UTEX 2576).